Here is a 367-residue protein sequence, read N- to C-terminus: Apolipoprotein A-V (367 aa).

A signal peptide spans 1–20 (MVAVLTWALALLSAFATAQT). The residue at position 56 (S56) is a Phosphoserine.

This sequence belongs to the apolipoprotein A1/A4/E family. In terms of assembly, interacts with GPIHBP1. Interacts with SORL1; this interaction leads to APOA5 internalization and sorting either to lysosomes and degradation, or to the trans-Golgi network. Phosphorylated by FAM20C in the extracellular medium.

It localises to the secreted. The protein localises to the early endosome. Its subcellular location is the late endosome. It is found in the golgi apparatus. The protein resides in the trans-Golgi network. Functionally, minor apolipoprotein mainly associated with HDL and to a lesser extent with VLDL. May also be associated with chylomicrons. Important determinant of plasma triglyceride (TG) levels by both being a potent stimulator of apo-CII lipoprotein lipase (LPL) TG hydrolysis and an inhibitor of the hepatic VLDL-TG production rate (without affecting the VLDL-apoB production rate). Activates poorly lecithin:cholesterol acyltransferase (LCAT) and does not enhance efflux of cholesterol from macrophages. Binds heparin. The chain is Apolipoprotein A-V (APOA5) from Phoca vitulina (Harbor seal).